The primary structure comprises 423 residues: 3-phosphoshikimate 1-carboxyvinyltransferase (423 aa).

3-phosphoshikimate contacts are provided by K19, S20, and R24. A phosphoenolpyruvate-binding site is contributed by K19. Residues G89 and R118 each contribute to the phosphoenolpyruvate site. 3-phosphoshikimate-binding residues include S164, S165, Q166, S192, D304, and K331. Q166 contacts phosphoenolpyruvate. D304 acts as the Proton acceptor in catalysis. Residues R335 and R377 each coordinate phosphoenolpyruvate.

The protein belongs to the EPSP synthase family. In terms of assembly, monomer.

Its subcellular location is the cytoplasm. It catalyses the reaction 3-phosphoshikimate + phosphoenolpyruvate = 5-O-(1-carboxyvinyl)-3-phosphoshikimate + phosphate. It participates in metabolic intermediate biosynthesis; chorismate biosynthesis. Its function is as follows. Catalyzes the transfer of the enolpyruvyl moiety of phosphoenolpyruvate (PEP) to the 5-hydroxyl of shikimate-3-phosphate (S3P) to produce enolpyruvyl shikimate-3-phosphate and inorganic phosphate. The protein is 3-phosphoshikimate 1-carboxyvinyltransferase of Korarchaeum cryptofilum (strain OPF8).